The sequence spans 232 residues: 5'-methylthioadenosine/S-adenosylhomocysteine nucleosidase (232 aa).

Glu12 (proton acceptor) is an active-site residue. Substrate-binding positions include Gly78, Val153, and 174–175 (ME). Residue Asp198 is the Proton donor of the active site.

This sequence belongs to the PNP/UDP phosphorylase family. MtnN subfamily.

It catalyses the reaction S-adenosyl-L-homocysteine + H2O = S-(5-deoxy-D-ribos-5-yl)-L-homocysteine + adenine. It carries out the reaction S-methyl-5'-thioadenosine + H2O = 5-(methylsulfanyl)-D-ribose + adenine. The enzyme catalyses 5'-deoxyadenosine + H2O = 5-deoxy-D-ribose + adenine. The protein operates within amino-acid biosynthesis; L-methionine biosynthesis via salvage pathway; S-methyl-5-thio-alpha-D-ribose 1-phosphate from S-methyl-5'-thioadenosine (hydrolase route): step 1/2. Functionally, catalyzes the irreversible cleavage of the glycosidic bond in both 5'-methylthioadenosine (MTA) and S-adenosylhomocysteine (SAH/AdoHcy) to adenine and the corresponding thioribose, 5'-methylthioribose and S-ribosylhomocysteine, respectively. Also cleaves 5'-deoxyadenosine, a toxic by-product of radical S-adenosylmethionine (SAM) enzymes, into 5-deoxyribose and adenine. The sequence is that of 5'-methylthioadenosine/S-adenosylhomocysteine nucleosidase from Photobacterium profundum (strain SS9).